Reading from the N-terminus, the 146-residue chain is Large ribosomal subunit protein uL22 (146 aa).

It belongs to the universal ribosomal protein uL22 family. As to quaternary structure, part of the 50S ribosomal subunit.

Functionally, this protein binds specifically to 23S rRNA; its binding is stimulated by other ribosomal proteins, e.g. L4, L17, and L20. It is important during the early stages of 50S assembly. It makes multiple contacts with different domains of the 23S rRNA in the assembled 50S subunit and ribosome. The globular domain of the protein is located near the polypeptide exit tunnel on the outside of the subunit, while an extended beta-hairpin is found that lines the wall of the exit tunnel in the center of the 70S ribosome. The sequence is that of Large ribosomal subunit protein uL22 from Nocardioides sp. (strain ATCC BAA-499 / JS614).